We begin with the raw amino-acid sequence, 529 residues long: MNNNDLVAKLWKLCDNLRDGGVSYQNYVNELASLLFLKMCKETGQEAEYLPEGYRWDDLKSRIGQEQLQFYRKMLVHLGEDDKKLVQAVFHNVSTTITEPKQITALVSNMDSLDWYNGAHGKSRDDFGDMYEGLLQKNANETKSGAGQYFTPRPLIKTIIHLLKPQPREVVQDPAAGTAGFLIEADRYVKSQTNDLDDLDGDTQDFQIHRAFIGLELVPGTRRLALMNCLLHDIEGNLDHGGAIRLGNTLGSDGENLPKAHIVATNPPFGSAAGTNITRTFVHPTSNKQLCFMQHIIETLHPGGRAAVVVPDNVLFEGGKGTDIRRDLMDKCHLHTILRLPTGIFYAQGVKTNVLFFTKGTVANPNQDKNCTDDVWVYDLRTNMPSFGKRTPFTDEHLQPFERVYGEDPHGLSPRTEGEWSFNAEETEVADSEENKNTDQHLATSRWRKFSREWIRTAKSDSLDISWLKDKDSIDADSLPEPDVLAAEAMGELVQALSELDALMRELGASDEADLQRQLLEEAFGGVKE.

Residues 148–153, 178–180, and Glu216 contribute to the S-adenosyl-L-methionine site; these read QYFTPR and TAG.

The protein belongs to the N(4)/N(6)-methyltransferase family. As to quaternary structure, the type I restriction/modification system is composed of three polypeptides R, M and S. The restriction enzyme has stoichiometry R(2)M(2)S(1). The methyltransferase is composed of M(2)S(1). (Microbial infection) Interacts with Escherichia phage T7 protein Ocr; this interaction leads to the inhibition of the methyltransferase restriction enzyme M.EcoKI composed of M(2)S(1).

The enzyme catalyses a 2'-deoxyadenosine in DNA + S-adenosyl-L-methionine = an N(6)-methyl-2'-deoxyadenosine in DNA + S-adenosyl-L-homocysteine + H(+). Functionally, the subtype gamma methyltransferase (M) subunit of a type I restriction enzyme. The M and S subunits together form a methyltransferase (MTase) that methylates A-2 on the top and A-3 on the bottom strand of the sequence 5'-AACN(6)GTGC-3'. In the presence of the R subunit the complex can also act as an endonuclease, binding to the same target sequence but cutting the DNA some distance from this site. Whether the DNA is cut or modified depends on the methylation state of the target sequence. When the target site is unmodified, the DNA is cut. When the target site is hemimethylated, the complex acts as a maintenance MTase modifying the DNA so that both strands become methylated. After locating a non-methylated recognition site, the enzyme complex serves as a molecular motor that translocates DNA in an ATP-dependent manner until a collision occurs that triggers cleavage. This is Type I restriction enzyme EcoKI methylase subunit from Escherichia coli (strain K12).